The following is a 317-amino-acid chain: MSHGPKQPGAASAPASGKAPGQHGSFVVAVKQERGEGPRAGEKGSHEEEPVKKRGWPKGKKRKKILPNGPKAPVTGYVRFLNERREQIRTRHPDLPFPEITKMLGAEWSKLQPAEKQRYLDEAEREKQQYMKELRAYQQSEAYKMCAEKIQEKKIKKEDSSSGLMNTLLNGHKGGDCDGFSTFDVPIFTEEFLDQNKAREAELRRLRKMNVAFEEQNAVLQRHTQSMSSARERLEQELALEERRTLALQQQLQAVRQALTASFASLPVPGTGETPTLSTLDFYMARLHGAIERDPAQHEKLIVRIKEILAQVASEHL.

Over residues 1–22 the composition is skewed to low complexity; that stretch reads MSHGPKQPGAASAPASGKAPGQ. The interval 1-71 is disordered; it reads MSHGPKQPGA…RKKILPNGPK (71 aa). Lys-31 participates in a covalent cross-link: Glycyl lysine isopeptide (Lys-Gly) (interchain with G-Cter in SUMO2). The span at 31-52 shows a compositional bias: basic and acidic residues; sequence KQERGEGPRAGEKGSHEEEPVK. Basic residues predominate over residues 53 to 65; the sequence is KRGWPKGKKRKKI. The segment at residues 70–138 is a DNA-binding region (HMG box); that stretch reads PKAPVTGYVR…QYMKELRAYQ (69 aa). Ser-160 is modified (phosphoserine). A coiled-coil region spans residues 190-257; it reads EEFLDQNKAR…LQQQLQAVRQ (68 aa).

In terms of assembly, component of a BHC histone deacetylase complex that contains HDAC1, HDAC2, HMG20B/BRAF35, KDM1A, RCOR1/CoREST and PHF21A/BHC80. The BHC complex may also contain ZMYM2, ZNF217, ZMYM3, GSE1 and GTF2I. Interacts with the BRCA2 tumor suppressor protein.

It is found in the nucleus. It localises to the chromosome. Functionally, required for correct progression through G2 phase of the cell cycle and entry into mitosis. Required for RCOR1/CoREST mediated repression of neuronal specific gene promoters. This chain is SWI/SNF-related matrix-associated actin-dependent regulator of chromatin subfamily E member 1-related (HMG20B), found in Bos taurus (Bovine).